A 102-amino-acid chain; its full sequence is MSFRKKKLKPPAGSQFIINDSIMSYIDRTKTLIRMIGCKNQYIKARMKDKTFFYTKQFRTAKNKFFFHLYHWEATHINVDHYICTCHPIFWGSIGQKLRRSA.

This is an uncharacterized protein from Saccharomyces cerevisiae (strain ATCC 204508 / S288c) (Baker's yeast).